Reading from the N-terminus, the 254-residue chain is 3-deoxy-manno-octulosonate cytidylyltransferase (254 aa).

This sequence belongs to the KdsB family.

It localises to the cytoplasm. The catalysed reaction is 3-deoxy-alpha-D-manno-oct-2-ulosonate + CTP = CMP-3-deoxy-beta-D-manno-octulosonate + diphosphate. It functions in the pathway nucleotide-sugar biosynthesis; CMP-3-deoxy-D-manno-octulosonate biosynthesis; CMP-3-deoxy-D-manno-octulosonate from 3-deoxy-D-manno-octulosonate and CTP: step 1/1. It participates in bacterial outer membrane biogenesis; lipopolysaccharide biosynthesis. In terms of biological role, activates KDO (a required 8-carbon sugar) for incorporation into bacterial lipopolysaccharide in Gram-negative bacteria. The chain is 3-deoxy-manno-octulosonate cytidylyltransferase from Haemophilus influenzae (strain ATCC 51907 / DSM 11121 / KW20 / Rd).